The chain runs to 75 residues: MARYFRRRKFCRFKAEGVQQIDYKDLATLRNYVTESGKIVPSRITGTSAKYQRQLATAIKRARYLALLPYTDLHK.

The protein belongs to the bacterial ribosomal protein bS18 family. As to quaternary structure, part of the 30S ribosomal subunit. Forms a tight heterodimer with protein bS6.

Its function is as follows. Binds as a heterodimer with protein bS6 to the central domain of the 16S rRNA, where it helps stabilize the platform of the 30S subunit. This Pseudoalteromonas translucida (strain TAC 125) protein is Small ribosomal subunit protein bS18.